The primary structure comprises 406 residues: Corticosteroid-binding globulin (406 aa).

The first 22 residues, 1–22 (MLLTLYACLLWLSTSGLWTSQA), serve as a signal peptide directing secretion. Residues N95, N119, and N223 are each glycosylated (N-linked (GlcNAc...) asparagine). Q253 lines the cortisol pocket. N-linked (GlcNAc...) asparagine glycosylation is present at N259. Cortisol is bound by residues Q285 and W394.

The protein belongs to the serpin family.

It localises to the secreted. Its function is as follows. Major transport protein for glucocorticoids and progestins in the blood of almost all vertebrate species. The sequence is that of Corticosteroid-binding globulin (Serpina6) from Sus scrofa (Pig).